The following is a 992-amino-acid chain: Leucine-rich repeat receptor-like serine/threonine-protein kinase BAM3 (992 aa).

Residues 1–21 (MADKIFTFFLILSSISPLLCS) form the signal peptide. At 22–656 (SLISPLNLSL…ARSRGEISAK (635 aa)) the chain is on the extracellular side. N28 carries an N-linked (GlcNAc...) asparagine glycan. A disulfide bond links C64 and C71. N-linked (GlcNAc...) asparagine glycans are attached at residues N75 and N87. LRR repeat units follow at residues 75–99 (NQSI…ISRL), 100–124 (SPSL…IYEL), 126–148 (GLEV…GFSQ), 150–173 (TQLV…LTTL), 174–199 (TRLE…SFLS), and 201–221 (KFLS…LANI). N131 and N163 each carry an N-linked (GlcNAc...) asparagine glycan. N220 carries N-linked (GlcNAc...) asparagine glycosylation. A CLE45 peptide binding motif is present at residues 226–231 (QLYLGY). LRR repeat units lie at residues 246 to 270 (LINL…LGNL), 271 to 294 (KNLE…LGNM), 296 to 320 (SLKT…GLQK), 322 to 342 (QLFN…VSEL), 343 to 366 (PDLQ…LGSN), 368 to 391 (NLIE…CFGR), 393 to 414 (LKIL…LGQC), 415 to 438 (EPLW…LIYL), 439 to 462 (PNLS…EAGN), 465 to 489 (FSSL…IRNL), 491 to 513 (SLQI…IGSL), 514 to 536 (KSLL…EFGD), 537 to 561 (CMSL…ISQI), 563 to 585 (ILNY…LGYM), and 586 to 610 (KSLT…QFSY). N-linked (GlcNAc...) asparagine glycans are attached at residues N256 and N293. A glycan (N-linked (GlcNAc...) asparagine) is linked at N354. 2 N-linked (GlcNAc...) asparagine glycosylation sites follow: N440 and N472. A glycan (N-linked (GlcNAc...) asparagine) is linked at N525. Residues N568, N575, N597, N613, N631, and N635 are each glycosylated (N-linked (GlcNAc...) asparagine). The chain crosses the membrane as a helical span at residues 657–677 (FKLFFGLGLLGFFLVFVVLAV). The Cytoplasmic segment spans residues 678–992 (VKNRRMRKNN…ISQAKQPNTF (315 aa)). A Protein kinase domain is found at 710 to 992 (VKENHVIGKG…ISQAKQPNTF (283 aa)). ATP-binding positions include 716–724 (IGKGGRGIV) and K738. D836 (proton acceptor) is an active-site residue.

This sequence belongs to the protein kinase superfamily. Ser/Thr protein kinase family. In terms of assembly, interacts with CLE45, especially in roots. Binds to the dimer CLV2/CRN. As to expression, expressed in seedlings, roots, leaves, stems, inflorescences, flowers and siliques. In roots, confined to protophloem and sieve element precursor cells.

Its subcellular location is the cell membrane. The protein localises to the endoplasmic reticulum membrane. The catalysed reaction is L-seryl-[protein] + ATP = O-phospho-L-seryl-[protein] + ADP + H(+). It catalyses the reaction L-threonyl-[protein] + ATP = O-phospho-L-threonyl-[protein] + ADP + H(+). In terms of biological role, necessary for male gametophyte development, as well as ovule specification and function. Required for the development of high-ordered vascular strands within the leaf and a correlated control of leaf shape, size and symmetry. LRR-rich receptor-like kinase (LRR-RLK) involved in the perception of CLE45 peptide ligand which mediates root growth inhibition by repressing protophloem differentiation; this mechanism requires CRN. BRX, BAM3, and CLE45 act together to regulate the transition of protophloem cells from proliferation to differentiation, thus impinging on postembryonic growth capacity of the root meristem. Necessary for CLE45 peptide-triggered accumulation of MAKR5 in developing sieve elements. This Arabidopsis thaliana (Mouse-ear cress) protein is Leucine-rich repeat receptor-like serine/threonine-protein kinase BAM3.